We begin with the raw amino-acid sequence, 411 residues long: Glutamate dehydrogenase 2, mitochondrial (411 aa).

Residues 1–18 (MNALAATSRNFRQAARLL) constitute a mitochondrion transit peptide. The active site involves Lys-102.

Belongs to the Glu/Leu/Phe/Val dehydrogenases family. In terms of tissue distribution, expressed in roots. Expressed ubiquitously in various tissues.

The protein resides in the mitochondrion. The catalysed reaction is L-glutamate + NAD(+) + H2O = 2-oxoglutarate + NH4(+) + NADH + H(+). It carries out the reaction L-glutamate + NADP(+) + H2O = 2-oxoglutarate + NH4(+) + NADPH + H(+). This Oryza sativa subsp. japonica (Rice) protein is Glutamate dehydrogenase 2, mitochondrial (GDH2).